The primary structure comprises 452 residues: UPF0210 protein Cthe_0410 (452 aa).

Belongs to the UPF0210 family. Homodimer.

The protein is UPF0210 protein Cthe_0410 of Acetivibrio thermocellus (strain ATCC 27405 / DSM 1237 / JCM 9322 / NBRC 103400 / NCIMB 10682 / NRRL B-4536 / VPI 7372) (Clostridium thermocellum).